Reading from the N-terminus, the 101-residue chain is Small ribosomal subunit protein bS18c (101 aa).

The protein belongs to the bacterial ribosomal protein bS18 family. Part of the 30S ribosomal subunit.

It localises to the plastid. It is found in the chloroplast. This Citrus sinensis (Sweet orange) protein is Small ribosomal subunit protein bS18c.